Here is a 685-residue protein sequence, read N- to C-terminus: Polyphosphate kinase (685 aa).

Asn45 provides a ligand contact to ATP. Positions 375 and 405 each coordinate Mg(2+). His435 serves as the catalytic Phosphohistidine intermediate. ATP contacts are provided by Tyr468, Arg564, and His592.

It belongs to the polyphosphate kinase 1 (PPK1) family. The cofactor is Mg(2+). In terms of processing, an intermediate of this reaction is the autophosphorylated ppk in which a phosphate is covalently linked to a histidine residue through a N-P bond.

The enzyme catalyses [phosphate](n) + ATP = [phosphate](n+1) + ADP. In terms of biological role, catalyzes the reversible transfer of the terminal phosphate of ATP to form a long-chain polyphosphate (polyP). The sequence is that of Polyphosphate kinase from Neisseria gonorrhoeae (strain ATCC 700825 / FA 1090).